Reading from the N-terminus, the 456-residue chain is Serine--tRNA ligase (456 aa).

252-254 (TSE) is a binding site for L-serine. Residues 283–285 (RKE) and V299 contribute to the ATP site. E306 lines the L-serine pocket. 370 to 373 (ELVS) lines the ATP pocket. An L-serine-binding site is contributed by T404.

It belongs to the class-II aminoacyl-tRNA synthetase family. Type-1 seryl-tRNA synthetase subfamily. As to quaternary structure, homodimer. The tRNA molecule binds across the dimer.

Its subcellular location is the cytoplasm. It catalyses the reaction tRNA(Ser) + L-serine + ATP = L-seryl-tRNA(Ser) + AMP + diphosphate + H(+). It carries out the reaction tRNA(Sec) + L-serine + ATP = L-seryl-tRNA(Sec) + AMP + diphosphate + H(+). It participates in aminoacyl-tRNA biosynthesis; selenocysteinyl-tRNA(Sec) biosynthesis; L-seryl-tRNA(Sec) from L-serine and tRNA(Sec): step 1/1. Functionally, catalyzes the attachment of serine to tRNA(Ser). Is also able to aminoacylate tRNA(Sec) with serine, to form the misacylated tRNA L-seryl-tRNA(Sec), which will be further converted into selenocysteinyl-tRNA(Sec). In Korarchaeum cryptofilum (strain OPF8), this protein is Serine--tRNA ligase.